A 218-amino-acid chain; its full sequence is Glutathione S-transferase U24 (218 aa).

The 80-residue stretch at D3–N82 folds into the GST N-terminal domain. Residues S13–M14, N39–K40, K53–I54, and E66–S67 contribute to the glutathione site. The GST C-terminal domain occupies D88–L215. T148 is subject to Phosphothreonine.

It belongs to the GST superfamily. Tau family.

It is found in the cytoplasm. It localises to the cytosol. It catalyses the reaction RX + glutathione = an S-substituted glutathione + a halide anion + H(+). Functionally, may be involved in the conjugation of reduced glutathione to a wide number of exogenous and endogenous hydrophobic electrophiles and have a detoxification role against certain herbicides. The protein is Glutathione S-transferase U24 (GSTU24) of Arabidopsis thaliana (Mouse-ear cress).